The primary structure comprises 45 residues: Mu-conotoxin-like Cal 12.1.2d (45 aa).

Cystine bridges form between Cys-3-Cys-16, Cys-11-Cys-28, Cys-18-Cys-33, and Cys-27-Cys-39. Residue Trp-17 is modified to 6'-bromotryptophan. Pro-23 is subject to 4-hydroxyproline. A 6'-bromotryptophan mark is found at Trp-37 and Trp-38. Position 40 is a 4-hydroxyproline (Pro-40).

As to expression, expressed by the venom duct.

It is found in the secreted. Mu-conotoxins block voltage-gated sodium channels. This toxin reversibly blocks voltage-gated sodium channel in cephalopods, with no alteration in the voltage dependence of sodium conductance or on the kinetics of inactivation. The polypeptide is Mu-conotoxin-like Cal 12.1.2d (Californiconus californicus (California cone)).